The chain runs to 152 residues: D-aminoacyl-tRNA deacylase (152 aa).

The short motif at 137–138 (GP) is the Gly-cisPro motif, important for rejection of L-amino acids element.

This sequence belongs to the DTD family. Homodimer.

Its subcellular location is the cytoplasm. It catalyses the reaction glycyl-tRNA(Ala) + H2O = tRNA(Ala) + glycine + H(+). The enzyme catalyses a D-aminoacyl-tRNA + H2O = a tRNA + a D-alpha-amino acid + H(+). An aminoacyl-tRNA editing enzyme that deacylates mischarged D-aminoacyl-tRNAs. Also deacylates mischarged glycyl-tRNA(Ala), protecting cells against glycine mischarging by AlaRS. Acts via tRNA-based rather than protein-based catalysis; rejects L-amino acids rather than detecting D-amino acids in the active site. By recycling D-aminoacyl-tRNA to D-amino acids and free tRNA molecules, this enzyme counteracts the toxicity associated with the formation of D-aminoacyl-tRNA entities in vivo and helps enforce protein L-homochirality. This chain is D-aminoacyl-tRNA deacylase, found in Geobacter sulfurreducens (strain ATCC 51573 / DSM 12127 / PCA).